The chain runs to 123 residues: ATP synthase epsilon chain (123 aa).

This sequence belongs to the ATPase epsilon chain family. F-type ATPases have 2 components, CF(1) - the catalytic core - and CF(0) - the membrane proton channel. CF(1) has five subunits: alpha(3), beta(3), gamma(1), delta(1), epsilon(1). CF(0) has three main subunits: a, b and c.

Its subcellular location is the cell inner membrane. Produces ATP from ADP in the presence of a proton gradient across the membrane. This is ATP synthase epsilon chain from Helicobacter acinonychis (strain Sheeba).